The following is a 613-amino-acid chain: Oxidoreductase GME11365 (613 aa).

Plastocyanin-like domains lie at 72-188 (ISEA…HGPS), 198-331 (PLLI…WIHG), and 431-571 (VDWR…EQPS).

Belongs to the multicopper oxidase family.

The protein operates within secondary metabolite biosynthesis. Functionally, oxidoreductase; part of the gene cluster that mediates the biosynthesis of dibenzodioxocinones such as pestalotiollide B, a novel class of inhibitors against cholesterol ester transfer protein (CEPT). The biosynthesis initiates from condensation of acetate and malonate units catalyzed by the non-reducing PKS pks8/GME11356. Pks8/GME11356 lacks a thioesterase (TE) domain, which is important to the cyclizing of the third ring of atrochrysone carboxylic acid, and the esterase GME11355 might play the role of TE and catalyzes the cyclization reaction of the C ring. The lactamase-like protein GME11357 (or other beta-lactamases in Pestalotiopsis microspora) probably hydrolyzes the thioester bond between the ACP of pks8/GME11356 and the intermediate to release atrochrysone carboxylic acid, which is spontaneously dehydrates to form endocrocin anthrone. Endocrocin anthrone is further converted to emodin via the endocrocin intermediate. Emodin is then oxidized by several enzymes such as the Baeyer-Villiger oxidase GME11358, the oxidoreductase GME11367, the short chain dehydrogenase/reductase GME11373, as well as by other oxidoreductases from the cluster, to modify the A and C rings and open the B ring, and finally yield monodictyphenone. The prenyltransferase GME11375 may catalyze the addition reaction between the C5 side chains and the carbon bone of dibenzodioxocinones. The remaining biochemical reactions to the final product dibenzodioxocinones should be methylation catalyzed by methyltransferase GME11366 and reduction and lactonization reaction catalyzed by a series of oxidordeuctases. This is Oxidoreductase GME11365 from Pestalotiopsis microspora.